Consider the following 504-residue polypeptide: L-amino-acid oxidase (504 aa).

Positions 1–18 (MNVFFMFSLLFLATLGSC) are cleaved as a signal peptide. Cys28 and Cys191 form a disulfide bridge. FAD-binding positions include 61–62 (MS), 81–82 (EA), Arg89, and 105–108 (GPMR). Arg108 provides a ligand contact to substrate. Asn190 is a glycosylation site (N-linked (GlcNAc...) asparagine). Residue His241 coordinates substrate. FAD is bound at residue Val279. Cys349 and Cys430 are oxidised to a cystine. N-linked (GlcNAc...) asparagine glycosylation occurs at Asn379. Tyr390 serves as a coordination point for substrate. FAD contacts are provided by residues Glu475 and 482-487 (GWIDST). Residue 482–483 (GW) participates in substrate binding.

Belongs to the flavin monoamine oxidase family. FIG1 subfamily. In terms of assembly, homodimer; non-covalently linked. FAD serves as cofactor. In terms of tissue distribution, expressed by the venom gland.

It is found in the secreted. The enzyme catalyses an L-alpha-amino acid + O2 + H2O = a 2-oxocarboxylate + H2O2 + NH4(+). It carries out the reaction L-leucine + O2 + H2O = 4-methyl-2-oxopentanoate + H2O2 + NH4(+). It catalyses the reaction L-phenylalanine + O2 + H2O = 3-phenylpyruvate + H2O2 + NH4(+). The catalysed reaction is L-tryptophan + O2 + H2O = indole-3-pyruvate + H2O2 + NH4(+). The enzyme catalyses L-methionine + O2 + H2O = 4-methylsulfanyl-2-oxobutanoate + H2O2 + NH4(+). It carries out the reaction L-tyrosine + O2 + H2O = 3-(4-hydroxyphenyl)pyruvate + H2O2 + NH4(+). Its function is as follows. Catalyzes an oxidative deamination of predominantly hydrophobic and aromatic L-amino acids, thus producing hydrogen peroxide that may contribute to the diverse toxic effects of this enzyme. Is highly active on L-Tyr followed by L-Phe, L-Met, L-Leu, L-Trp, and weakly active on L-Ile, L-Arg, L-Val, L-Lys, and L-Ala. Inhibits ADP- and collagen-induced platelet aggregation. This inhibition is inhibited by catalase, indicating the importance of generated H(2)O(2) for the inhibitory effect. This effect on platelets among snake L-amino-acid oxidases is however controversial, since some of them induce aggregation, whereas the other inhibit agonist-induced aggregation. In vivo, this enzyme induces a rapid, substantial and reversible increase in the paw volume of mice (edema). In addition, myofibrosis, and inflammatory cell infiltration on the paw tissue are also observed. This is L-amino-acid oxidase from Daboia russelii (Russel's viper).